The sequence spans 185 residues: Elongation factor P (185 aa).

It belongs to the elongation factor P family.

Its subcellular location is the cytoplasm. It participates in protein biosynthesis; polypeptide chain elongation. Functionally, involved in peptide bond synthesis. Stimulates efficient translation and peptide-bond synthesis on native or reconstituted 70S ribosomes in vitro. Probably functions indirectly by altering the affinity of the ribosome for aminoacyl-tRNA, thus increasing their reactivity as acceptors for peptidyl transferase. This chain is Elongation factor P, found in Geobacillus kaustophilus (strain HTA426).